We begin with the raw amino-acid sequence, 430 residues long: Trigger factor (430 aa).

One can recognise a PPIase FKBP-type domain in the interval Gly-163–Pro-248.

Belongs to the FKBP-type PPIase family. Tig subfamily.

It is found in the cytoplasm. The catalysed reaction is [protein]-peptidylproline (omega=180) = [protein]-peptidylproline (omega=0). Involved in protein export. Acts as a chaperone by maintaining the newly synthesized protein in an open conformation. Functions as a peptidyl-prolyl cis-trans isomerase. In Clostridium botulinum (strain ATCC 19397 / Type A), this protein is Trigger factor.